The sequence spans 373 residues: Bifunctional enzyme IspD/IspF (373 aa).

Residues 1 to 213 (MSDLTLVLLG…CLQKPSATKR (213 aa)) form a 2-C-methyl-D-erythritol 4-phosphate cytidylyltransferase region. The tract at residues 213-373 (RIGNGLDVHA…TLHYFDWSEI (161 aa)) is 2-C-methyl-D-erythritol 2,4-cyclodiphosphate synthase. Residues D219 and H221 each contribute to the a divalent metal cation site. 4-CDP-2-C-methyl-D-erythritol 2-phosphate-binding positions include 219–221 (DVH) and 245–246 (HS). H253 serves as a coordination point for a divalent metal cation. Residues 267 to 269 (DIG), 272 to 276 (FPDSD), 343 to 346 (TTTE), F350, and R353 contribute to the 4-CDP-2-C-methyl-D-erythritol 2-phosphate site.

This sequence in the N-terminal section; belongs to the IspD/TarI cytidylyltransferase family. IspD subfamily. It in the C-terminal section; belongs to the IspF family. It depends on a divalent metal cation as a cofactor.

It catalyses the reaction 2-C-methyl-D-erythritol 4-phosphate + CTP + H(+) = 4-CDP-2-C-methyl-D-erythritol + diphosphate. The enzyme catalyses 4-CDP-2-C-methyl-D-erythritol 2-phosphate = 2-C-methyl-D-erythritol 2,4-cyclic diphosphate + CMP. The protein operates within isoprenoid biosynthesis; isopentenyl diphosphate biosynthesis via DXP pathway; isopentenyl diphosphate from 1-deoxy-D-xylulose 5-phosphate: step 2/6. It participates in isoprenoid biosynthesis; isopentenyl diphosphate biosynthesis via DXP pathway; isopentenyl diphosphate from 1-deoxy-D-xylulose 5-phosphate: step 4/6. Bifunctional enzyme that catalyzes the formation of 4-diphosphocytidyl-2-C-methyl-D-erythritol from CTP and 2-C-methyl-D-erythritol 4-phosphate (MEP) (IspD), and catalyzes the conversion of 4-diphosphocytidyl-2-C-methyl-D-erythritol 2-phosphate (CDP-ME2P) to 2-C-methyl-D-erythritol 2,4-cyclodiphosphate (ME-CPP) with a corresponding release of cytidine 5-monophosphate (CMP) (IspF). This chain is Bifunctional enzyme IspD/IspF, found in Nitratiruptor sp. (strain SB155-2).